A 355-amino-acid polypeptide reads, in one-letter code: Probable butyrate kinase (355 aa).

It belongs to the acetokinase family.

The protein resides in the cytoplasm. The enzyme catalyses butanoate + ATP = butanoyl phosphate + ADP. This chain is Probable butyrate kinase, found in Clostridium botulinum (strain Eklund 17B / Type B).